The chain runs to 453 residues: Dibenzothiophene-sulfone monooxygenase (453 aa).

5 residues coordinate FMN: aspartate 59, threonine 106, histidine 156, tyrosine 160, and serine 231.

It belongs to the NtaA/SnaA/DszA monooxygenase family. In terms of assembly, homodimer.

The protein localises to the cytoplasm. It carries out the reaction dibenzothiophene 5,5-dioxide + FMNH2 + NADH + O2 = 2'-hydroxybiphenyl-2-sulfinate + FMN + NAD(+) + H2O + H(+). It functions in the pathway sulfur metabolism; dibenzothiophene degradation. Functionally, catalyzes the second step of the '4S' desulfurization pathway that removes covalently bound sulfur from dibenzothiophene (DBT) without breaking carbon-carbon bonds. Metabolizes DBT-sulfone (DBTO2 or DBT 5,5-dioxide) to 2-(2'-hydroxyphenyl)benzene sulphinate (HBPS). The sequence is that of Dibenzothiophene-sulfone monooxygenase from Rhodococcus erythropolis (strain XP).